The sequence spans 739 residues: Sulfate transporter (739 aa).

Basic and acidic residues-rich tracts occupy residues 1–17 (MSSE…RDLP) and 31–46 (TQRR…ETGH). The segment at 1-47 (MSSENKEQHDLSPRDLPEEAFGFPSELPLETQRRSGTDLRQSETGHG) is disordered. Residue serine 12 is modified to Phosphoserine. A run of 2 helical transmembrane segments spans residues 112-132 (VMSG…YSLL) and 137-157 (PIYG…FGTS). A glycan (N-linked (GlcNAc...) asparagine) is linked at asparagine 205. Helical transmembrane passes span 227–247 (FMAG…VSVY) and 255–275 (GFVT…LLGL). Asparagine 357 carries N-linked (GlcNAc...) asparagine glycosylation. 4 helical membrane passes run 378 to 398 (LIPN…AITV), 420 to 440 (AIGF…SAAL), 455 to 475 (LSAI…APLF), and 524 to 544 (LLST…CVIL). One can recognise an STAS domain in the interval 568–719 (TYKNLRSKSG…YSLSEAVAFA (152 aa)).

It belongs to the SLC26A/SulP transporter (TC 2.A.53) family. In terms of processing, N-glycosylated. As to expression, distributed mainly in the thymus, testis and osteoblastic cells. Highly expressed in the bone, cartilage, kidney and colon.

It is found in the cell membrane. The protein localises to the apical cell membrane. The enzyme catalyses oxalate(in) + sulfate(out) = oxalate(out) + sulfate(in). It carries out the reaction sulfate(out) + 2 chloride(in) = sulfate(in) + 2 chloride(out). It catalyses the reaction oxalate(out) + 2 chloride(in) = oxalate(in) + 2 chloride(out). The catalysed reaction is bromide(in) + chloride(out) = bromide(out) + chloride(in). The enzyme catalyses nitrate(in) + chloride(out) = nitrate(out) + chloride(in). It carries out the reaction iodide(in) + chloride(out) = iodide(out) + chloride(in). Its function is as follows. Sulfate transporter which mediates sulfate uptake into chondrocytes in order to maintain adequate sulfation of proteoglycans which is needed for cartilage development. Mediates electroneutral anion exchange of sulfate ions for oxalate ions, sulfate and oxalate ions for chloride and/or hydroxyl ions and chloride ions for bromide, iodide and nitrate ions. The coupling of sulfate transport to both hydroxyl and chloride ions likely serves to ensure transport at both acidic pH when most sulfate uptake is mediated by sulfate-hydroxide exchange and alkaline pH when most sulfate uptake is mediated by sulfate-chloride exchange. Essential for chondrocyte proliferation, differentiation and cell size expansion. The protein is Sulfate transporter (Slc26a2) of Mus musculus (Mouse).